Reading from the N-terminus, the 278-residue chain is MGCCGCSGGCGSSCGGCGSGCGGCGSGCGGCGSGCGGSGSSCCVPVCCCKPVCCRVPTCSCSSCGKGGCGSSGGSKGGCGSCGGCKGGCGSCGGSKGGCGSCGGSKGGCGSCGGSKGGCGSGCGGCGSSCCVPVCCCKPMCCCVPACSCSSCGKGGCGSCGCSKGACGSCGGSKGGCGSCGGCKGGCGSCGGSKGGCGSGCGGCGSGCGVPVCCCSCSSCGSCAGSKGGCGSSCSQCSCCKPCCCSSGCGSSCCQSSCCKPCCSQSSCCVPVCCQCKI.

8 tandem repeats follow at residues 42 to 45, 48 to 51, 130 to 133, 136 to 139, 142 to 145, 239 to 242, 258 to 261, and 268 to 271. The interval 42 to 271 is 8 X 4 AA repeats of C-C-X-P; that stretch reads CCVPVCCCKP…CCSQSSCCVP (230 aa).

Belongs to the KRTAP type 5 family. Interacts with hair keratins. Expressed in hair root but not in skin. Expressed also in lung, pancreas, ovary, testis.

In terms of biological role, in the hair cortex, hair keratin intermediate filaments are embedded in an interfilamentous matrix, consisting of hair keratin-associated protein (KRTAP), which are essential for the formation of a rigid and resistant hair shaft through their extensive disulfide bond cross-linking with abundant cysteine residues of hair keratins. The matrix proteins include the high-sulfur and high-glycine-tyrosine keratins. This is Keratin-associated protein 5-1 (KRTAP5-1) from Homo sapiens (Human).